Here is a 97-residue protein sequence, read N- to C-terminus: MDSSSSSSAAGLGSVDPQLQHFIEVETQKQRFQQLVHQMTELCWEKCMDKPGPKLDSRAEACFVNCVERFIDTSQFILNRLEQTQKSKPVFSESLSD.

Residues 43 to 66 (CWEKCMDKPGPKLDSRAEACFVNC) carry the Twin CX3C motif motif. Intrachain disulfides connect cysteine 43/cysteine 66 and cysteine 47/cysteine 62. Phosphoserine occurs at positions 57, 87, 94, and 96.

This sequence belongs to the small Tim family. As to quaternary structure, heterohexamer; composed of 3 copies of TIMM8A and 3 copies of TIMM13, named soluble 70 kDa complex. Associates with the TIM22 complex, whose core is composed of TIMM22.

It is found in the mitochondrion inner membrane. In terms of biological role, mitochondrial intermembrane chaperone that participates in the import and insertion of some multi-pass transmembrane proteins into the mitochondrial inner membrane. Also required for the transfer of beta-barrel precursors from the TOM complex to the sorting and assembly machinery (SAM complex) of the outer membrane. Acts as a chaperone-like protein that protects the hydrophobic precursors from aggregation and guide them through the mitochondrial intermembrane space. The TIMM8-TIMM13 complex mediates the import of proteins such as TIMM23, SLC25A12/ARALAR1 and SLC25A13/ARALAR2, while the predominant TIMM9-TIMM10 70 kDa complex mediates the import of much more proteins. The chain is Mitochondrial import inner membrane translocase subunit Tim8 A (TIMM8A) from Bos taurus (Bovine).